A 508-amino-acid polypeptide reads, in one-letter code: Probable cytosol aminopeptidase (508 aa).

Mn(2+) is bound by residues Lys274 and Asp279. The active site involves Lys286. Mn(2+) is bound by residues Asp297, Asp356, and Glu358. The active site involves Arg360.

This sequence belongs to the peptidase M17 family. Requires Mn(2+) as cofactor.

The protein localises to the cytoplasm. The catalysed reaction is Release of an N-terminal amino acid, Xaa-|-Yaa-, in which Xaa is preferably Leu, but may be other amino acids including Pro although not Arg or Lys, and Yaa may be Pro. Amino acid amides and methyl esters are also readily hydrolyzed, but rates on arylamides are exceedingly low.. It catalyses the reaction Release of an N-terminal amino acid, preferentially leucine, but not glutamic or aspartic acids.. Functionally, presumably involved in the processing and regular turnover of intracellular proteins. Catalyzes the removal of unsubstituted N-terminal amino acids from various peptides. The sequence is that of Probable cytosol aminopeptidase from Cutibacterium acnes (strain DSM 16379 / KPA171202) (Propionibacterium acnes).